We begin with the raw amino-acid sequence, 460 residues long: MASNSSSCPTPGGGHLNGYPVTPYAFFFPHMLGGLSPPSSLPGIQHQLPVSGYSTPSPATVETQSTSSEEIVPSPPSPPPLPRIYKPCFVCQDKSSGYHYGVSACEGCKGFFRRSIQKNMVYTCHRDKNCIINKVTRNRCQYCRLQKCFEVGMSKESVRNDRNKKKKDVPKTECSESYIVTPEVEELIEKVRKAHQETFPALCQLGKYTTNNSSEQRVSLDIDLWDKFSELSTKCIIKTVEFAKQLPGFTTLTIADQITLLKAACLDILILRICTRYTPEQDTMTFSDGLTLNRTQMHNAGFGPLTDLVFAFANQLLPLEMDDAETGLLSAICLICGDRQDLEQPDKVDKLQEPLLEALKIYVRKRRPNKPHMFPKMLMKITDLRSISAKGAERVITLKMEIPGSMPPLIQEMLENSEGMDTLGGQPGGPRTGGLGPPPGSCSPSLSPSSTRSSPATHSP.

Residues 1-87 form a modulating region; that stretch reads MASNSSSCPT…PPPLPRIYKP (87 aa). Positions 46–78 are disordered; sequence HQLPVSGYSTPSPATVETQSTSSEEIVPSPPSP. Residues 52 to 69 are compositionally biased toward polar residues; it reads GYSTPSPATVETQSTSSE. NR C4-type zinc fingers lie at residues 88-108 and 124-148; these read CFVCQDKSSGYHYGVSACEGC and CHRDKNCIINKVTRNRCQYCRLQKC. Positions 88-153 form a DNA-binding region, nuclear receptor; that stretch reads CFVCQDKSSG…RLQKCFEVGM (66 aa). Residues 154–182 form a hinge region; the sequence is SKESVRNDRNKKKKDVPKTECSESYIVTP. One can recognise an NR LBD domain in the interval 183 to 417; it reads EVEELIEKVR…PLIQEMLENS (235 aa). A 9aaTAD motif is present at residues 408-416; sequence PLIQEMLEN. A disordered region spans residues 418-460; the sequence is EGMDTLGGQPGGPRTGGLGPPPGSCSPSLSPSSTRSSPATHSP. Gly residues predominate over residues 425 to 435; the sequence is GQPGGPRTGGL. Positions 442–460 are enriched in low complexity; it reads CSPSLSPSSTRSSPATHSP.

This sequence belongs to the nuclear hormone receptor family. NR1 subfamily. In terms of assembly, heterodimer; with an RXR molecule. Binds DNA preferentially as a RAR/RXR heterodimer. As to expression, ubiquitous.

It localises to the nucleus. Receptor for retinoic acid. Retinoic acid receptors bind as heterodimers to their target response elements in response to their ligands, all-trans or 9-cis retinoic acid, and regulate gene expression in various biological processes. The RAR/RXR heterodimers bind to the retinoic acid response elements (RARE) composed of tandem 5'-AGGTCA-3' sites known as DR1-DR5. Required for hindbrain patterning and appears to be required for skin development. In Gallus gallus (Chicken), this protein is Retinoic acid receptor alpha (RARA).